The primary structure comprises 296 residues: Protoheme IX farnesyltransferase (296 aa).

9 helical membrane-spanning segments follow: residues 13–33 (IIFG…KGII), 35–55 (YPLF…GCVF), 84–104 (VTLI…YIAA), 107–127 (LAMW…SLYM), 132–152 (VYGT…GYCA), 162–182 (LILL…IAIF), 208–228 (ITLY…VGYA), 229–249 (GYKY…MALR), and 264–284 (FVFS…DFSV).

This sequence belongs to the UbiA prenyltransferase family. Protoheme IX farnesyltransferase subfamily.

The protein resides in the cell inner membrane. The enzyme catalyses heme b + (2E,6E)-farnesyl diphosphate + H2O = Fe(II)-heme o + diphosphate. It participates in porphyrin-containing compound metabolism; heme O biosynthesis; heme O from protoheme: step 1/1. In terms of biological role, converts heme B (protoheme IX) to heme O by substitution of the vinyl group on carbon 2 of heme B porphyrin ring with a hydroxyethyl farnesyl side group. The polypeptide is Protoheme IX farnesyltransferase (Edwardsiella ictaluri (strain 93-146)).